A 214-amino-acid polypeptide reads, in one-letter code: Imidazole glycerol phosphate synthase subunit HisH (214 aa).

The region spanning 2 to 214 (RVALIDYGSG…LIANFLRWAP (213 aa)) is the Glutamine amidotransferase type-1 domain. Cys-88 acts as the Nucleophile in catalysis. Residues His-194 and Glu-196 contribute to the active site.

As to quaternary structure, heterodimer of HisH and HisF.

The protein localises to the cytoplasm. It carries out the reaction 5-[(5-phospho-1-deoxy-D-ribulos-1-ylimino)methylamino]-1-(5-phospho-beta-D-ribosyl)imidazole-4-carboxamide + L-glutamine = D-erythro-1-(imidazol-4-yl)glycerol 3-phosphate + 5-amino-1-(5-phospho-beta-D-ribosyl)imidazole-4-carboxamide + L-glutamate + H(+). The catalysed reaction is L-glutamine + H2O = L-glutamate + NH4(+). It functions in the pathway amino-acid biosynthesis; L-histidine biosynthesis; L-histidine from 5-phospho-alpha-D-ribose 1-diphosphate: step 5/9. IGPS catalyzes the conversion of PRFAR and glutamine to IGP, AICAR and glutamate. The HisH subunit catalyzes the hydrolysis of glutamine to glutamate and ammonia as part of the synthesis of IGP and AICAR. The resulting ammonia molecule is channeled to the active site of HisF. The protein is Imidazole glycerol phosphate synthase subunit HisH of Rhodospirillum rubrum (strain ATCC 11170 / ATH 1.1.1 / DSM 467 / LMG 4362 / NCIMB 8255 / S1).